The chain runs to 145 residues: 3-hydroxyacyl-[acyl-carrier-protein] dehydratase FabZ (145 aa).

Residue His-51 is part of the active site.

The protein belongs to the thioester dehydratase family. FabZ subfamily.

The protein resides in the cytoplasm. The catalysed reaction is a (3R)-hydroxyacyl-[ACP] = a (2E)-enoyl-[ACP] + H2O. Its function is as follows. Involved in unsaturated fatty acids biosynthesis. Catalyzes the dehydration of short chain beta-hydroxyacyl-ACPs and long chain saturated and unsaturated beta-hydroxyacyl-ACPs. The chain is 3-hydroxyacyl-[acyl-carrier-protein] dehydratase FabZ from Staphylococcus carnosus (strain TM300).